Reading from the N-terminus, the 620-residue chain is MAAATADPGAGNPQAGDSSGGDSGGGLPSPGEQELSRRLQRLYPAVNQHETPLPRSWSPKDKYNYIGLSQGNLRVHYKGHGKNHKDAASVRATHPIPAACGIYYFEVKIVSKGRDGYMGIGLSAQGVNMNRLPGWDKHSYGYHGDDGHSFCSSGTGQPYGPTFTTGDVIGCCVNLINGTCFYTKNGHSLGIAFTDLPANLYPTVGLQTPGEIVDANFGQQPFLFDIEDYMREWRAKVQGTVHGFPISARLGEWQAVLQNMVSSYLVHHGYCSTATAFARMTETPIQEEQASIKNRQKIQKLVLEGRVGEAIETTQRFYPGLLEHNPNLLFMLKCRQFVEMVNGTDSEVRSLSSRSPKSQDSYPGSPSLSPRHGPSSSHIHNTGADSPSCSNGVASTKNKQNHSKYPAPSSSSSSSSSSSSSSPSSVNYSESNSTDSTKSQPHSSTSNQETSDSEMEMEAEHYPNGVLESVSTRIVNGAYKHDDLQTDESSMDDGHPRRQLCGGNQAATERIILFGRELQALSEQLGREYGKNLAHTEMLQDAFSLLAYSDPWSCPVGHQLDPIQREPVCAALNSAILESQNLPKQPPLMLALGQASECLRLMARAGLGSCSFARVDDYLH.

The tract at residues 1-38 (MAAATADPGAGNPQAGDSSGGDSGGGLPSPGEQELSRR) is disordered. Ala2 carries the N-acetylalanine modification. Over residues 18–28 (SSGGDSGGGLP) the composition is skewed to gly residues. A B30.2/SPRY domain is found at 35–222 (LSRRLQRLYP…VDANFGQQPF (188 aa)). The LisH domain maps to 253–285 (WQAVLQNMVSSYLVHHGYCSTATAFARMTETPI). The 58-residue stretch at 291 to 348 (SIKNRQKIQKLVLEGRVGEAIETTQRFYPGLLEHNPNLLFMLKCRQFVEMVNGTDSEV) folds into the CTLH domain. A compositionally biased stretch (polar residues) spans 347 to 398 (EVRSLSSRSPKSQDSYPGSPSLSPRHGPSSSHIHNTGADSPSCSNGVASTKN). Residues 347–460 (EVRSLSSRSP…SDSEMEMEAE (114 aa)) are disordered. Ser361 is modified (phosphoserine). Tyr362 carries the phosphotyrosine modification. 4 positions are modified to phosphoserine: Ser365, Ser367, Ser369, and Ser422. Over residues 409–436 (SSSSSSSSSSSSSSPSSVNYSESNSTDS) the composition is skewed to low complexity. The segment covering 437 to 450 (TKSQPHSSTSNQET) has biased composition (polar residues). Ser451 and Ser453 each carry phosphoserine.

This sequence belongs to the RANBP9/10 family. As to quaternary structure, may form homodimers. Identified in the CTLH complex that contains GID4, RANBP9 and/or RANBP10, MKLN1, MAEA, RMND5A (or alternatively its paralog RMND5B), GID8, ARMC8, WDR26 and YPEL5. Within this complex, MAEA, RMND5A (or alternatively its paralog RMND5B), GID8, WDR26, and RANBP9 and/or RANBP10 form the catalytic core, while GID4, MKLN1, ARMC8 and YPEL5 have ancillary roles. Interacts with RAN and RANBP9. Interacts with the HGF receptor MET. Interacts with AR. Interacts with TUBB1. Interacts with YPEL5. May interact with TUBB5. Interacts with DDX4. In terms of tissue distribution, expressed at highest levels in spleen and liver. Expressed in megakaryocytes and platelets (at protein level).

Its subcellular location is the cytoplasm. It localises to the nucleus. Its function is as follows. May act as an adapter protein to couple membrane receptors to intracellular signaling pathways. Core component of the CTLH E3 ubiquitin-protein ligase complex that selectively accepts ubiquitin from UBE2H and mediates ubiquitination and subsequent proteasomal degradation of the transcription factor HBP1. Enhances dihydrotestosterone-induced transactivation activity of AR, as well as dexamethasone-induced transactivation activity of NR3C1, but does not affect estrogen-induced transactivation. Acts as a guanine nucleotide exchange factor (GEF) for RAN GTPase. May play an essential role in hemostasis and in maintaining microtubule dynamics with respect to both platelet shape and function. The protein is Ran-binding protein 10 (Ranbp10) of Mus musculus (Mouse).